A 545-amino-acid chain; its full sequence is Chaperonin GroEL (545 aa).

ATP-binding positions include 29–32 (TMGP), K50, 86–90 (DGTTT), G414, 477–479 (DAA), and D493.

The protein belongs to the chaperonin (HSP60) family. Forms a cylinder of 14 subunits composed of two heptameric rings stacked back-to-back. Interacts with the co-chaperonin GroES.

The protein resides in the cytoplasm. It carries out the reaction ATP + H2O + a folded polypeptide = ADP + phosphate + an unfolded polypeptide.. Functionally, together with its co-chaperonin GroES, plays an essential role in assisting protein folding. The GroEL-GroES system forms a nano-cage that allows encapsulation of the non-native substrate proteins and provides a physical environment optimized to promote and accelerate protein folding. The protein is Chaperonin GroEL of Campylobacter jejuni (strain RM1221).